Consider the following 572-residue polypeptide: Proline--tRNA ligase (572 aa).

It belongs to the class-II aminoacyl-tRNA synthetase family. ProS type 1 subfamily. In terms of assembly, homodimer.

It localises to the cytoplasm. The enzyme catalyses tRNA(Pro) + L-proline + ATP = L-prolyl-tRNA(Pro) + AMP + diphosphate. Functionally, catalyzes the attachment of proline to tRNA(Pro) in a two-step reaction: proline is first activated by ATP to form Pro-AMP and then transferred to the acceptor end of tRNA(Pro). As ProRS can inadvertently accommodate and process non-cognate amino acids such as alanine and cysteine, to avoid such errors it has two additional distinct editing activities against alanine. One activity is designated as 'pretransfer' editing and involves the tRNA(Pro)-independent hydrolysis of activated Ala-AMP. The other activity is designated 'posttransfer' editing and involves deacylation of mischarged Ala-tRNA(Pro). The misacylated Cys-tRNA(Pro) is not edited by ProRS. The chain is Proline--tRNA ligase from Dichelobacter nodosus (strain VCS1703A).